The chain runs to 209 residues: Small ribosomal subunit protein mS23 (209 aa).

It belongs to the mitochondrion-specific ribosomal protein mS23 family. In terms of assembly, component of the mitochondrial small ribosomal subunit.

The protein resides in the mitochondrion. This chain is Small ribosomal subunit protein mS23 (rsm25), found in Sclerotinia sclerotiorum (strain ATCC 18683 / 1980 / Ss-1) (White mold).